The chain runs to 545 residues: tRNA-2-methylthio-N(6)-dimethylallyladenosine synthase (545 aa).

Residues 1 to 32 (MSSASPLARCCDEATPSAGPRAAQPPYHGPVT) form a disordered region. The 117-residue stretch at 58–174 (RTYQVRTYGC…LPTLLERARH (117 aa)) folds into the MTTase N-terminal domain. Residues Cys67, Cys103, Cys137, Cys211, Cys215, and Cys218 each coordinate [4Fe-4S] cluster. The 237-residue stretch at 197 to 433 (RESAYAAWVS…IALQEQISLE (237 aa)) folds into the Radical SAM core domain. Positions 436–504 (RALVGQAVEV…PHHLIADAGV (69 aa)) constitute a TRAM domain.

It belongs to the methylthiotransferase family. MiaB subfamily. Monomer. [4Fe-4S] cluster is required as a cofactor.

The protein resides in the cytoplasm. The enzyme catalyses N(6)-dimethylallyladenosine(37) in tRNA + (sulfur carrier)-SH + AH2 + 2 S-adenosyl-L-methionine = 2-methylsulfanyl-N(6)-dimethylallyladenosine(37) in tRNA + (sulfur carrier)-H + 5'-deoxyadenosine + L-methionine + A + S-adenosyl-L-homocysteine + 2 H(+). In terms of biological role, catalyzes the methylthiolation of N6-(dimethylallyl)adenosine (i(6)A), leading to the formation of 2-methylthio-N6-(dimethylallyl)adenosine (ms(2)i(6)A) at position 37 in tRNAs that read codons beginning with uridine. The sequence is that of tRNA-2-methylthio-N(6)-dimethylallyladenosine synthase from Mycobacterium bovis (strain BCG / Pasteur 1173P2).